A 461-amino-acid polypeptide reads, in one-letter code: Argininosuccinate lyase (461 aa).

The protein belongs to the lyase 1 family. Argininosuccinate lyase subfamily.

The protein resides in the cytoplasm. The catalysed reaction is 2-(N(omega)-L-arginino)succinate = fumarate + L-arginine. It participates in amino-acid biosynthesis; L-arginine biosynthesis; L-arginine from L-ornithine and carbamoyl phosphate: step 3/3. With respect to regulation, strongly inhibited by L-arginine. Inhibitory effects are lowered at pH 7.0 compared to those at pH 8.0. At 42 degrees Celsius and pH 8.0, activity decreases to 77% and 25% in the presence of 1 mM and 10 mM arginine, respectively. The other amino and organic acids do not affect activity. Functionally, catalyzes the last step of arginine biosynthesis, the conversion of argininosuccinate into L-arginine and fumarate. This Nostoc sp. (strain PCC 7120 / SAG 25.82 / UTEX 2576) protein is Argininosuccinate lyase.